Reading from the N-terminus, the 280-residue chain is Protoheme IX farnesyltransferase 2 (280 aa).

9 helical membrane passes run 12–32 (VIWL…GGVD), 35–55 (LFSL…FNHY), 76–96 (LITP…GISL), 98–118 (FLLL…FYAV), 129–149 (WLNI…GYAL), 158–178 (AVLI…ALAF), 199–221 (ERAV…WLYL), 226–248 (GAGG…YAAV), and 255–275 (MWKM…ALMI).

The protein belongs to the UbiA prenyltransferase family. Protoheme IX farnesyltransferase subfamily.

It is found in the cell membrane. The catalysed reaction is heme b + (2E,6E)-farnesyl diphosphate + H2O = Fe(II)-heme o + diphosphate. It participates in porphyrin-containing compound metabolism; heme O biosynthesis; heme O from protoheme: step 1/1. Converts heme B (protoheme IX) to heme O by substitution of the vinyl group on carbon 2 of heme B porphyrin ring with a hydroxyethyl farnesyl side group. The protein is Protoheme IX farnesyltransferase 2 of Pyrobaculum aerophilum (strain ATCC 51768 / DSM 7523 / JCM 9630 / CIP 104966 / NBRC 100827 / IM2).